We begin with the raw amino-acid sequence, 172 residues long: Large ribosomal subunit protein uL10 (172 aa).

This sequence belongs to the universal ribosomal protein uL10 family. Part of the ribosomal stalk of the 50S ribosomal subunit. The N-terminus interacts with L11 and the large rRNA to form the base of the stalk. The C-terminus forms an elongated spine to which L12 dimers bind in a sequential fashion forming a multimeric L10(L12)X complex.

In terms of biological role, forms part of the ribosomal stalk, playing a central role in the interaction of the ribosome with GTP-bound translation factors. This is Large ribosomal subunit protein uL10 from Chlorobium luteolum (strain DSM 273 / BCRC 81028 / 2530) (Pelodictyon luteolum).